The sequence spans 890 residues: Potassium/sodium hyperpolarization-activated cyclic nucleotide-gated channel 1 (890 aa).

The disordered stretch occupies residues Met-1 to Phe-93. Topologically, residues Met-1 to Arg-142 are cytoplasmic. Low complexity predominate over residues Asn-8–Ala-34. A compositionally biased stretch (gly residues) spans Asp-62–Pro-77. A helical membrane pass occupies residues Phe-143–Ile-164. Residues Thr-165–Thr-173 lie on the Extracellular side of the membrane. A helical membrane pass occupies residues Pro-174 to Phe-194. The Cytoplasmic segment spans residues Arg-195–Met-215. The chain crosses the membrane as a helical span at residues Asn-216–Phe-236. The Extracellular portion of the chain corresponds to Leu-237–Thr-260. A helical; Voltage-sensor transmembrane segment spans residues Lys-261–Trp-281. Residues Glu-282–Val-295 lie on the Cytoplasmic side of the membrane. The helical transmembrane segment at Val-296–Leu-318 threads the bilayer. Residues Val-319–Gln-344 are Extracellular-facing. Residue Asn-338 is glycosylated (N-linked (GlcNAc...) asparagine). The segment at residues Tyr-345–Pro-366 is an intramembrane region (pore-forming). The short motif at Cys-358–Gly-362 is the Selectivity filter element. At Val-367–Asp-371 the chain is on the extracellular side. Residues Leu-372–His-392 form a helical membrane-spanning segment. The Cytoplasmic segment spans residues Ala-393 to Leu-890. 3',5'-cyclic AMP contacts are provided by Gly-539, Glu-540, Cys-542, Arg-549, Thr-550, Arg-590, and Arg-593. 2 stretches are compositionally biased toward low complexity: residues Met-644–Ser-691 and Gln-731–Gln-749. Disordered regions lie at residues Met-644 to Ala-692, Ser-725 to Glu-796, and Met-845 to Leu-890. Residues Ser-770 to Thr-780 show a composition bias toward polar residues. Pro residues predominate over residues Arg-854–Ala-865. A compositionally biased stretch (basic and acidic residues) spans Asp-880–Leu-890.

It belongs to the potassium channel HCN family. Homotetramer. Heterotetramer with HCN2. The potassium channel is composed of a homo- or heterotetrameric complex of pore-forming subunits. Interacts with KCNE2. Interacts with the SH3 domain of CSK. As to expression, detected in brain, in particular in amygdala and hippocampus, while expression in caudate nucleus, corpus callosum, substantia nigra, subthalamic nucleus and thalamus is very low or not detectable. Detected at very low levels in muscle and pancreas.

It localises to the cell membrane. The enzyme catalyses Na(+)(in) = Na(+)(out). It carries out the reaction K(+)(in) = K(+)(out). With respect to regulation, activated by cAMP, and at 10-100 times higher concentrations, also by cGMP. cAMP binding promotes tetramerization and formation of an active channel. Compared to other family members, cAMP has less stimulatory effect on HCN1 because part of the molecules already contain bound cAMP and form homotetramers when cAMP levels are low, this inherent tetramerization in HCN1 results in a weaker response to increased cAMP. Inhibited by Cs(1+), zatebradine, capsazepine and ZD7288. Its function is as follows. Hyperpolarization-activated ion channel that are permeable to sodium and potassium ions. Displays lower selectivity for K(+) over Na(+) ions. Contributes to the native pacemaker currents in heart (If) and in the generation of the I(h) current which controls neuron excitability. Participates in cerebellar mechanisms of motor learning. May mediate responses to sour stimuli. This Homo sapiens (Human) protein is Potassium/sodium hyperpolarization-activated cyclic nucleotide-gated channel 1 (HCN1).